Consider the following 722-residue polypeptide: Protein HAPLESS 2-A (722 aa).

Residues 1-24 (MPRRRGTPLPTILLLLAFVGGACG) form the signal peptide. Residues 25 to 552 (TEILSKSRLE…LFDFGCHIQY (528 aa)) lie on the Extracellular side of the membrane. Disulfide bonds link C36-C48, C129-C159, C141-C188, C160-C315, C162-C171, C298-C322, and C435-C473. Residues 553–573 (VCIGWILLLLLIPAAVVFLWL) form a helical membrane-spanning segment. The Cytoplasmic portion of the chain corresponds to 574–722 (LHQEGLFDPL…HRDGHYSPSV (149 aa)). The span at 598–641 (RRRHQKGRHHRHHHDHRHRHGHSHGDHHHHYHGGHHQRRRHHHP) shows a compositional bias: basic residues. Disordered regions lie at residues 598 to 665 (RRRH…RNHH) and 680 to 722 (RLDR…SPSV). Basic and acidic residues predominate over residues 646–662 (VEGHHHDRQQHSHEAGR). Basic residues predominate over residues 701–711 (RRSRHERHGGH). Basic and acidic residues predominate over residues 712–722 (GHRDGHYSPSV).

The protein belongs to the HAP2/GCS1 family.

It is found in the endoplasmic reticulum membrane. It localises to the cell membrane. Its function is as follows. Required for male fertility. Plays a role in pollen tube guidance and successful gamete attachment. Essential for the fusion of gametes during double fertilization, where one male gamete fuses with the egg to produce a zygote, and another male gamete fuses with the central cell to produce the endosperm. Mediates the fusion of cell membranes. Not required for pollen tube outgrowth. This chain is Protein HAPLESS 2-A (HAP2A), found in Oryza sativa subsp. japonica (Rice).